The chain runs to 138 residues: Mini-ribonuclease 3 (138 aa).

Residue aspartate 33 is part of the active site.

The protein belongs to the MrnC RNase family. Homodimer. The cofactor is Mg(2+).

The protein resides in the cytoplasm. Functionally, involved in correct processing of both the 5' and 3' ends of 23S rRNA precursor. Processes 30S rRNA precursor transcript even in absence of ribonuclease 3 (Rnc); Rnc processes 30S rRNA into smaller rRNA precursors. This is Mini-ribonuclease 3 from Synechococcus sp. (strain ATCC 27144 / PCC 6301 / SAUG 1402/1) (Anacystis nidulans).